Reading from the N-terminus, the 242-residue chain is Glucosamine-6-phosphate deaminase (242 aa).

Asp-67 acts as the Proton acceptor; for enolization step in catalysis. Residue Asn-136 is the For ring-opening step of the active site. His-138 (proton acceptor; for ring-opening step) is an active-site residue. Residue Glu-143 is the For ring-opening step of the active site.

Belongs to the glucosamine/galactosamine-6-phosphate isomerase family. NagB subfamily.

The catalysed reaction is alpha-D-glucosamine 6-phosphate + H2O = beta-D-fructose 6-phosphate + NH4(+). The protein operates within amino-sugar metabolism; N-acetylneuraminate degradation; D-fructose 6-phosphate from N-acetylneuraminate: step 5/5. In terms of biological role, catalyzes the reversible isomerization-deamination of glucosamine 6-phosphate (GlcN6P) to form fructose 6-phosphate (Fru6P) and ammonium ion. The sequence is that of Glucosamine-6-phosphate deaminase from Clostridium perfringens (strain SM101 / Type A).